The primary structure comprises 253 residues: 5'-nucleotidase SurE (253 aa).

Positions 8, 9, 39, and 91 each coordinate a divalent metal cation.

It belongs to the SurE nucleotidase family. The cofactor is a divalent metal cation.

The protein localises to the cytoplasm. It carries out the reaction a ribonucleoside 5'-phosphate + H2O = a ribonucleoside + phosphate. Nucleotidase that shows phosphatase activity on nucleoside 5'-monophosphates. This is 5'-nucleotidase SurE from Leptothrix cholodnii (strain ATCC 51168 / LMG 8142 / SP-6) (Leptothrix discophora (strain SP-6)).